A 347-amino-acid polypeptide reads, in one-letter code: Phosphate acyltransferase (347 aa).

The protein belongs to the PlsX family. Homodimer. Probably interacts with PlsY.

The protein localises to the cytoplasm. It carries out the reaction a fatty acyl-[ACP] + phosphate = an acyl phosphate + holo-[ACP]. Its pathway is lipid metabolism; phospholipid metabolism. Catalyzes the reversible formation of acyl-phosphate (acyl-PO(4)) from acyl-[acyl-carrier-protein] (acyl-ACP). This enzyme utilizes acyl-ACP as fatty acyl donor, but not acyl-CoA. In Dehalococcoides mccartyi (strain ATCC BAA-2100 / JCM 16839 / KCTC 5957 / BAV1), this protein is Phosphate acyltransferase.